Consider the following 231-residue polypeptide: Urease accessory protein UreF (231 aa).

It belongs to the UreF family. In terms of assembly, ureD, UreF and UreG form a complex that acts as a GTP-hydrolysis-dependent molecular chaperone, activating the urease apoprotein by helping to assemble the nickel containing metallocenter of UreC. The UreE protein probably delivers the nickel.

It localises to the cytoplasm. In terms of biological role, required for maturation of urease via the functional incorporation of the urease nickel metallocenter. This Marinobacter nauticus (strain ATCC 700491 / DSM 11845 / VT8) (Marinobacter aquaeolei) protein is Urease accessory protein UreF.